We begin with the raw amino-acid sequence, 83 residues long: Small ribosomal subunit protein bS16 (83 aa).

The protein belongs to the bacterial ribosomal protein bS16 family.

This is Small ribosomal subunit protein bS16 from Pseudomonas fluorescens (strain Pf0-1).